A 492-amino-acid chain; its full sequence is Protein adenylyltransferase Fic (492 aa).

Low complexity predominate over residues 1–17; that stretch reads MCMEAEPPSPPAQQQEQ. Residues 1–21 form a disordered region; that stretch reads MCMEAEPPSPPAQQQEQVNPP. A helical transmembrane segment spans residues 33–55; sequence LYRLVLLFVAGSLAAWTFHALSS. TPR repeat units lie at residues 118–151 and 152–186; these read ALGA…APRH and PEVL…SPSN. Residues 243 to 248 carry the Inhibitory (S/T)XXXE(G/N) motif motif; that stretch reads SVGIEG. Residues Glu247 and 328-331 each bind ATP; that span reads VGGH. The region spanning 297-432 is the Fido domain; sequence ITIKDILELH…IRPFVRFIAD (136 aa). His375 is a catalytic residue. Residues 379–386, 411–412, and Asn419 each bind ATP; these read DGNGRTSR and YY.

It belongs to the fic family. In terms of assembly, homodimer.

The protein localises to the membrane. The enzyme catalyses L-tyrosyl-[protein] + ATP = O-(5'-adenylyl)-L-tyrosyl-[protein] + diphosphate. It catalyses the reaction L-threonyl-[protein] + ATP = 3-O-(5'-adenylyl)-L-threonyl-[protein] + diphosphate. The catalysed reaction is 3-O-(5'-adenylyl)-L-threonyl-[protein] + H2O = L-threonyl-[protein] + AMP + H(+). With respect to regulation, the side chain of Glu-247 determines which of the two opposing activities (AMPylase or de-AMPylase) will take place. In response to endoplasmic reticulum stress, mediates de-AMPylase activity. Adenylyltransferase activity is inhibited by the inhibitory helix present at the N-terminus: Glu-247 binds ATP and competes with ATP-binding at Arg-386, thereby preventing adenylyltransferase activity. In unstressed cells, disengagement of Glu-247 promotes adenylyltransferase activity. Activation dissociates ATP-binding from Glu-247, allowing ordered binding of the entire ATP moiety with the alpha-phosphate in an orientation that is productive for accepting an incoming target hydroxyl side chain. Functionally, protein that can both mediate the addition of adenosine 5'-monophosphate (AMP) to specific residues of target proteins (AMPylation), and the removal of the same modification from target proteins (de-AMPylation), depending on the context. The side chain of Glu-247 determines which of the two opposing activities (AMPylase or de-AMPylase) will take place. Acts as a key regulator of the unfolded protein response (UPR) by mediating AMPylation or de-AMPylation of Hsc70-3/BiP. In unstressed cells, acts as an adenylyltransferase by mediating AMPylation of Hsc70-3/BiP at 'Thr-518', thereby inactivating it. In response to endoplasmic reticulum stress, acts as a phosphodiesterase by mediating removal of ATP (de-AMPylation) from Hsc70-3/BiP at 'Thr-518', leading to restore HSPA5/BiP activity. The protein is Protein adenylyltransferase Fic of Drosophila simulans (Fruit fly).